We begin with the raw amino-acid sequence, 504 residues long: Maturase K (504 aa).

This sequence belongs to the intron maturase 2 family. MatK subfamily.

The protein resides in the plastid. Its subcellular location is the chloroplast. Usually encoded in the trnK tRNA gene intron. Probably assists in splicing its own and other chloroplast group II introns. This is Maturase K from Quercus robur (English oak).